The primary structure comprises 333 residues: 4-hydroxyproline 2-epimerase (333 aa).

Residue Cys-91 is the Proton acceptor of the active site. Substrate contacts are provided by residues 92 to 93, His-225, and Asp-250; that span reads GH. Cys-254 functions as the Proton donor in the catalytic mechanism. 255–256 is a binding site for substrate; the sequence is GT.

The protein belongs to the proline racemase family.

It carries out the reaction trans-4-hydroxy-L-proline = cis-4-hydroxy-D-proline. Its function is as follows. Catalyzes the epimerization of trans-4-hydroxy-L-proline (t4LHyp) to cis-4-hydroxy-D-proline (c4DHyp). Is likely involved in a degradation pathway that converts t4LHyp to alpha-ketoglutarate. Displays no proline racemase activity. In Streptosporangium roseum (strain ATCC 12428 / DSM 43021 / JCM 3005 / KCTC 9067 / NCIMB 10171 / NRRL 2505 / NI 9100), this protein is 4-hydroxyproline 2-epimerase.